Consider the following 182-residue polypeptide: Large ribosomal subunit protein bL19m (182 aa).

A mitochondrion-targeting transit peptide spans 1–21 (MFNAKHFFNLGLGFQWLQKRG).

Belongs to the bacterial ribosomal protein bL19 family. Component of the mitochondrial large ribosomal subunit (mt-LSU). Mature yeast 74S mitochondrial ribosomes consist of a small (37S) and a large (54S) subunit. The 37S small subunit contains a 15S ribosomal RNA (15S mt-rRNA) and at least 32 different proteins. The 54S large subunit contains a 21S rRNA (21S mt-rRNA) and at least 45 different proteins.

The protein localises to the mitochondrion. Its function is as follows. Component of the mitochondrial ribosome (mitoribosome), a dedicated translation machinery responsible for the synthesis of mitochondrial genome-encoded proteins, including at least some of the essential transmembrane subunits of the mitochondrial respiratory chain. The mitoribosomes are attached to the mitochondrial inner membrane and translation products are cotranslationally integrated into the membrane. bL19m is essential for respiration. The polypeptide is Large ribosomal subunit protein bL19m (img1) (Schizosaccharomyces pombe (strain 972 / ATCC 24843) (Fission yeast)).